A 426-amino-acid chain; its full sequence is O-methyltransferase pyvH (426 aa).

Residues 258–259 (GG), aspartate 281, 308–309 (DF), and arginine 323 each bind S-adenosyl-L-methionine. Histidine 327 serves as the catalytic Proton acceptor.

The protein belongs to the class I-like SAM-binding methyltransferase superfamily. Cation-independent O-methyltransferase family.

It participates in secondary metabolite biosynthesis. In terms of biological role, O-methyltransferase; part of the gene cluster that mediates the biosynthesis of pyranoviolin A, a pyranonigrin analog with a C-3 methoxy group. Initially, the PKS portion of pyvA synthesizes C-10 carbon chain from 5 molecules of malonyl-CoA, which is then condensed with the thiolation (T) domain-bound glycine activated by the adenylation (A) domain. The subsequent chain release by Dieckmann condensation (DKC) could be catalyzed by the TE domain present at the C-terminus of pyvA and/or the alpha/beta hydrolase pyvD, installing the tetramic acid moiety. The FAD-dependent monooxygenase pyvC next epoxidizes one of the olefins of the polyketide part, and the epoxide ring-opening induces the dihydro-gamma-pyrone ring formation. The cytochrome P450 monooxygeanse pyvB would be responsible for the 2 consecutive reactions, in which the dihydro-gamma-pyrone is oxidized to gamma-pyrone and C-7 is hydroxylated to yield pyranonigrin F. Finally, the O-methyltransferase pyvH methylates the C-3 hydroxy group to complete the biosynthesis. This Aspergillus violaceofuscus (strain CBS 115571) protein is O-methyltransferase pyvH.